The chain runs to 137 residues: Global transcriptional regulator Spx (137 aa).

The cysteines at positions 10 and 13 are disulfide-linked.

Belongs to the ArsC family. Spx subfamily. In terms of assembly, interacts with the C-terminal domain of the alpha subunit of the RNAP.

It localises to the cytoplasm. Its function is as follows. Global transcriptional regulator that plays a key role in stress response and exerts either positive or negative regulation of genes. Acts by interacting with the C-terminal domain of the alpha subunit of the RNA polymerase (RNAP). This interaction can enhance binding of RNAP to the promoter region of target genes and stimulate their transcription, or block interaction of RNAP with activator. The polypeptide is Global transcriptional regulator Spx (Streptococcus mutans serotype c (strain ATCC 700610 / UA159)).